The sequence spans 376 residues: MLTYSHQNIDQSDIDTLTKALKDEILTGGKKVNEFEEALCEYMGVKHACVLNSATSALHLAYTALGVQEKIVLTTPLTFAATANAALMAGAKVEFIDIKNDGNIDEKKLEARLLKESENIGAISVVDFAGNSVEMDEISNLTKKYNIPLIDDASHALGALYKSEKVGKKADLSIFSFHPVKPITTFEGGAVVSDNEELIDKIKLLRSHGIVKKRLWDSDMVELGYNYRLSDVACALGINQLKKLDHNLEKREEIANFYDKEFEKNPYFSTIKIKDYKKSSRHLYPILLFPEFYCQKEELFESLLHAGIGVQVHYKPTYEFSFYKKLLGEIKLQNADNFYKAELSIPCHQEMNLKDAKFVKDTLFSILEKVKKGYCG.

Substrate contacts are provided by residues tyrosine 4, 24–27 (EILT), alanine 54, and serine 176. An N6-(pyridoxal phosphate)lysine modification is found at lysine 181. Substrate contacts are provided by residues asparagine 226 and 311–314 (QVHY).

The protein belongs to the DegT/DnrJ/EryC1 family.

It catalyses the reaction UDP-4-amino-4,6-dideoxy-N-acetyl-beta-L-altrosamine + 2-oxoglutarate = UDP-2-acetamido-2,6-dideoxy-beta-L-arabino-hex-4-ulose + L-glutamate. Its function is as follows. Catalyzes the second step in the biosynthesis of pseudaminic acid, a sialic-acid-like sugar that is used to modify flagellin. Uses UDP-2-acetamido-2,6-dideoxy-beta-L-arabino-4-hexulose as substrate producing UDP-4-amino-4,6-dideoxy-beta-L-AltNAc. The protein is UDP-4-amino-4,6-dideoxy-N-acetyl-beta-L-altrosamine transaminase (pseC) of Campylobacter jejuni subsp. jejuni serotype O:2 (strain ATCC 700819 / NCTC 11168).